Here is a 364-residue protein sequence, read N- to C-terminus: MSTPSSLQVLVKRVLDFQHVSEDDYCILKCCGLWWHGGPIMLSTNEDNQMMIKSASFKDGLEINLALMMAVQENNCSLIELFTEWGADINSGLVTVNTEYTRNLCRNLGAKETLNKREILDVFLKLKNFKSSNNIILSHELLSNNPLFLSEDNDYFRRIINCNLRRISINFILDEISFNEKLTRFWYSQAVLYNLTEAIQYFYQKYEHLNEWRLICALSFNNVFDLHEIYNKEKVGMDINQMIEITCAYMCSYSTIYYCFVMGADINRAMIISVTKSYTYNLFFCIDLGATAFEECLEIAKQQNNNELVKILSLKNYYSPDSSLISLKITDPEKINILLDEENYESKNELIYEESNINNSDDIF.

Belongs to the asfivirus MGF 360 family.

Its function is as follows. Plays a role in virus cell tropism, and may be required for efficient virus replication in macrophages. In African swine fever virus (isolate Pig/Kenya/KEN-50/1950) (ASFV), this protein is Protein MGF 360-21R.